The chain runs to 345 residues: Beta-hexosaminidase (345 aa).

Substrate-binding positions include D60, R68, R132, and 162–163 (KH). H175 acts as the Proton donor/acceptor in catalysis. D247 acts as the Nucleophile in catalysis.

It belongs to the glycosyl hydrolase 3 family. NagZ subfamily.

The protein localises to the cytoplasm. It carries out the reaction Hydrolysis of terminal non-reducing N-acetyl-D-hexosamine residues in N-acetyl-beta-D-hexosaminides.. It participates in cell wall biogenesis; peptidoglycan recycling. In terms of biological role, plays a role in peptidoglycan recycling by cleaving the terminal beta-1,4-linked N-acetylglucosamine (GlcNAc) from peptide-linked peptidoglycan fragments, giving rise to free GlcNAc, anhydro-N-acetylmuramic acid and anhydro-N-acetylmuramic acid-linked peptides. The sequence is that of Beta-hexosaminidase from Actinobacillus pleuropneumoniae serotype 5b (strain L20).